Here is a 417-residue protein sequence, read N- to C-terminus: Serine hydroxymethyltransferase (417 aa).

(6S)-5,6,7,8-tetrahydrofolate contacts are provided by residues Leu121 and 125-127; that span reads GHL. Lys229 bears the N6-(pyridoxal phosphate)lysine mark. 355-357 provides a ligand contact to (6S)-5,6,7,8-tetrahydrofolate; sequence SPF.

This sequence belongs to the SHMT family. In terms of assembly, homodimer. The cofactor is pyridoxal 5'-phosphate.

The protein resides in the cytoplasm. It catalyses the reaction (6R)-5,10-methylene-5,6,7,8-tetrahydrofolate + glycine + H2O = (6S)-5,6,7,8-tetrahydrofolate + L-serine. It participates in one-carbon metabolism; tetrahydrofolate interconversion. Its pathway is amino-acid biosynthesis; glycine biosynthesis; glycine from L-serine: step 1/1. Functionally, catalyzes the reversible interconversion of serine and glycine with tetrahydrofolate (THF) serving as the one-carbon carrier. This reaction serves as the major source of one-carbon groups required for the biosynthesis of purines, thymidylate, methionine, and other important biomolecules. Also exhibits THF-independent aldolase activity toward beta-hydroxyamino acids, producing glycine and aldehydes, via a retro-aldol mechanism. The polypeptide is Serine hydroxymethyltransferase (Xanthomonas axonopodis pv. citri (strain 306)).